We begin with the raw amino-acid sequence, 630 residues long: Zinc finger protein 37 homolog (630 aa).

Disordered regions lie at residues 1–45, 77–172, and 193–285; these read MSVS…SAAE, KPDM…PSKK, and HSRN…KHEK. Over residues 14 to 30 the composition is skewed to basic and acidic residues; the sequence is ETVDRRRSAETTKEAGR. A KRAB domain is found at 32-103; sequence LEMAVSEPEA…KGKRPSQGCP (72 aa). Residue S42 is modified to Phosphoserine. Residues 110 to 122 are compositionally biased toward basic and acidic residues; the sequence is KQKETDGKVQKDD. A compositionally biased stretch (basic residues) spans 161–172; sequence NNLHKKHVPSKK. Positions 193–206 are enriched in basic and acidic residues; that stretch reads HSRNCVKRKSDAAK. The span at 221-231 shows a compositional bias: basic residues; the sequence is KGKKQTGKKHE. Composition is skewed to basic and acidic residues over residues 232–243 and 260–274; these read KLSSHSSSDKCN and IKQD…HEKS. 2 C2H2-type zinc fingers span residues 293-315 and 321-343; these read YECN…QRVH and YECN…QRTH. The segment at 349-367 adopts a C2H2-type 3; atypical zinc-finger fold; the sequence is YECIQCGKAHGHKHALTDH. C2H2-type zinc fingers lie at residues 377-399, 405-427, 433-455, 461-483, 489-511, 517-539, 545-567, 573-595, and 601-623; these read YECA…VRSH, YECK…VRTH, YECN…MRIH, FECN…QRTH, YKCN…MRTH, FECN…QRVH, YECN…QRTH, YECN…QRSH, and YECN…VKTH.

It belongs to the krueppel C2H2-type zinc-finger protein family. In terms of tissue distribution, expressed at low level in several tissues including fetal cartilage.

Its subcellular location is the nucleus. Its function is as follows. May be involved in transcriptional regulation. This Homo sapiens (Human) protein is Zinc finger protein 37 homolog (ZFP37).